A 209-amino-acid chain; its full sequence is Large ribosomal subunit protein uL3 (209 aa).

The disordered stretch occupies residues 130–162 (RGPMTHGSKFKRAPGSMGASSDPSRTFKNKRMP).

The protein belongs to the universal ribosomal protein uL3 family. As to quaternary structure, part of the 50S ribosomal subunit. Forms a cluster with proteins L14 and L19.

Functionally, one of the primary rRNA binding proteins, it binds directly near the 3'-end of the 23S rRNA, where it nucleates assembly of the 50S subunit. The sequence is that of Large ribosomal subunit protein uL3 from Clostridium botulinum (strain Alaska E43 / Type E3).